A 339-amino-acid chain; its full sequence is Holliday junction branch migration complex subunit RuvB (339 aa).

The tract at residues 1–187 (MQGFEDENRI…FGVICKLDYY (187 aa)) is large ATPase domain (RuvB-L). ATP is bound by residues leucine 26, arginine 27, glycine 68, lysine 71, threonine 72, threonine 73, 134–136 (EDF), arginine 177, tyrosine 187, and arginine 224. A Mg(2+)-binding site is contributed by threonine 72. The segment at 188 to 258 (TVDELSKIVL…VAKDALELLG (71 aa)) is small ATPAse domain (RuvB-S). The segment at 261 to 339 (SLGLDFVDEK…HLKIPYPNEK (79 aa)) is head domain (RuvB-H). DNA contacts are provided by arginine 297, arginine 316, and arginine 321.

This sequence belongs to the RuvB family. In terms of assembly, homohexamer. Forms an RuvA(8)-RuvB(12)-Holliday junction (HJ) complex. HJ DNA is sandwiched between 2 RuvA tetramers; dsDNA enters through RuvA and exits via RuvB. An RuvB hexamer assembles on each DNA strand where it exits the tetramer. Each RuvB hexamer is contacted by two RuvA subunits (via domain III) on 2 adjacent RuvB subunits; this complex drives branch migration. In the full resolvosome a probable DNA-RuvA(4)-RuvB(12)-RuvC(2) complex forms which resolves the HJ.

It localises to the cytoplasm. The catalysed reaction is ATP + H2O = ADP + phosphate + H(+). In terms of biological role, the RuvA-RuvB-RuvC complex processes Holliday junction (HJ) DNA during genetic recombination and DNA repair, while the RuvA-RuvB complex plays an important role in the rescue of blocked DNA replication forks via replication fork reversal (RFR). RuvA specifically binds to HJ cruciform DNA, conferring on it an open structure. The RuvB hexamer acts as an ATP-dependent pump, pulling dsDNA into and through the RuvAB complex. RuvB forms 2 homohexamers on either side of HJ DNA bound by 1 or 2 RuvA tetramers; 4 subunits per hexamer contact DNA at a time. Coordinated motions by a converter formed by DNA-disengaged RuvB subunits stimulates ATP hydrolysis and nucleotide exchange. Immobilization of the converter enables RuvB to convert the ATP-contained energy into a lever motion, pulling 2 nucleotides of DNA out of the RuvA tetramer per ATP hydrolyzed, thus driving DNA branch migration. The RuvB motors rotate together with the DNA substrate, which together with the progressing nucleotide cycle form the mechanistic basis for DNA recombination by continuous HJ branch migration. Branch migration allows RuvC to scan DNA until it finds its consensus sequence, where it cleaves and resolves cruciform DNA. This is Holliday junction branch migration complex subunit RuvB from Clostridioides difficile (strain 630) (Peptoclostridium difficile).